The primary structure comprises 628 residues: MSDWSIGLARQVWSVQHWSGGYFDISDEGRVVARPDRDPARAPLDLAGIAAEARHQGLGLPVLVRFLDILHDRVDSLCQAFRQAMVEDGYRGGYRAVYPIKVNQQRRVVEEIIRHGNGRVGLEAGSKPELMAVLALTPPGGTVVCNGYKDREYVRLALRGRQLGLQVHLVIEKASELELVLEEAAALGVTPSLGMRVRLATIGAGKWQNTGGEKSKFGLTAAQALAVVDRLRAAGCLDWLRLLHFHLGSQIPNIRDIRRGMREAARYYAELRALGAPVETVDVGGGLGVDYEGSRSRSFCSMNYTVAEYAHNVVHALWQVCEDEGLPHPDIITESGRAMTAHHAVLITDVIDGDRVPGGADLLAPADAAPRVLHELWTVWTGLDRRHPLEAYHDAAHGLAEAQELYAHGVLNLTDRARAERIWQAVCHALLQRLDPRRRPHRELLDELNEKLADKLFCNFSLFQSMPDVWAIDQIFPVLPLQRLDEPPASRAVLQDLTCDSDGCIRGYVDRDGVESTLPLPPWRPGEPYLLGIFLVGAYQEILGDMHNLFGDTHSVNVRLTGEGYALSGAAHGDTITDVLRYVDFDAEVLRGIYRERVVAAAGLDATARAQCLADLEAGLRGYTYLDT.

An N6-(pyridoxal phosphate)lysine modification is found at K101. 281-291 (VDVGGGLGVDY) lines the substrate pocket.

This sequence belongs to the Orn/Lys/Arg decarboxylase class-II family. SpeA subfamily. Mg(2+) serves as cofactor. The cofactor is pyridoxal 5'-phosphate.

It carries out the reaction L-arginine + H(+) = agmatine + CO2. It functions in the pathway amine and polyamine biosynthesis; agmatine biosynthesis; agmatine from L-arginine: step 1/1. Functionally, catalyzes the biosynthesis of agmatine from arginine. In Alkalilimnicola ehrlichii (strain ATCC BAA-1101 / DSM 17681 / MLHE-1), this protein is Biosynthetic arginine decarboxylase.